Consider the following 1308-residue polypeptide: Contactin-associated protein-like 4 (1308 aa).

A signal peptide spans 1–25; it reads MGSVTGAVLKTLLLLSTQNWNRVEA. Over 26–1241 the chain is Extracellular; it reads GNSYDCDDPL…LANAIKSDSA (1216 aa). In terms of domain architecture, F5/8 type C spans 31–177; it reads CDDPLVSALP…IGMRIEVFGC (147 aa). The cysteines at positions 31 and 177 are disulfide-linked. 2 consecutive Laminin G-like domains span residues 212-364 and 398-547; these read FKTM…SFSC and FRTW…IDSC. 4 N-linked (GlcNAc...) asparagine glycosylation sites follow: Asn260, Asn285, Asn359, and Asn538. Cystine bridges form between Cys332–Cys364, Cys515–Cys547, Cys553–Cys564, and Cys558–Cys573. An EGF-like 1 domain is found at 549–586; it reads ISDRCLPNYCEHGGECSQSWSTFHCNCTNTGYRGATCH. Asn574 carries an N-linked (GlcNAc...) asparagine glycan. A disulfide bond links Cys575 and Cys585. In terms of domain architecture, Fibrinogen C-terminal spans 587–792; sequence NSIYEQSCEA…LLCQGDRSFW (206 aa). Residues Asn602, Asn625, Asn637, Asn706, and Asn748 are each glycosylated (N-linked (GlcNAc...) asparagine). One can recognise a Laminin G-like 3 domain in the interval 793–957; that stretch reads NSASFDTEAS…AQVTPEVQPG (165 aa). 4 disulfides stabilise this stretch: Cys931–Cys958, Cys962–Cys975, Cys969–Cys984, and Cys986–Cys996. Residues 958–997 enclose the EGF-like 2 domain; the sequence is CRGHCSSYGKLCRNGGKCRERPIGFFCDCTFSAYTGPFCS. Asn1023 and Asn1073 each carry an N-linked (GlcNAc...) asparagine glycan. Residues 1046–1202 form the Laminin G-like 4 domain; that stretch reads FRTTRTPSLL…VTGHVTESSC (157 aa). A disulfide bridge connects residues Cys1167 and Cys1202. Residues 1242-1262 traverse the membrane as a helical segment; sequence VIGGLIAVVIFILLCITAIAV. Topologically, residues 1263–1308 are cytoplasmic; sequence RIYQQKRLYKRSEAKRSENVDSAEAVLKSELNIQNAVNENQKEYFF.

Belongs to the neurexin family. As to quaternary structure, interacts with TIAM1.

Its subcellular location is the presynaptic cell membrane. Its function is as follows. Presynaptic protein involved in both dopaminergic synaptic transmission and GABAergic system, thereby participating in the structural maturation of inhibitory interneuron synapses. Involved in the dopaminergic synaptic transmission by attenuating dopamine release through a presynaptic mechanism. Also participates in the GABAergic system. In Homo sapiens (Human), this protein is Contactin-associated protein-like 4 (CNTNAP4).